The chain runs to 541 residues: DNA polymerase epsilon subunit B (541 aa).

This sequence belongs to the DNA polymerase epsilon subunit B family. Heterotetramer. Consists of four subunits: POL2, DPB2, DPB3 and DPB4.

Its subcellular location is the nucleus. As accessory component of the DNA polymerase epsilon (DNA polymerase II) participates in chromosomal DNA replication. The protein is DNA polymerase epsilon subunit B (DPB2) of Cryptococcus neoformans var. neoformans serotype D (strain B-3501A) (Filobasidiella neoformans).